A 445-amino-acid polypeptide reads, in one-letter code: MAAQAPVDEIAQLSVSDAATTKPKPGLDSATATNGNLNRDSDDSDDDAENAAPGAETGAAKKKKKRKPKKKKKNPTAQSDPPRVLISQLFPDKVYPKGEEVEYVNENRYRTTNEEKRHLDNLKNDFYNDYRHAAEAHRQTRQWAQKNIKPGWSLTDIANGIEDSVRALVGHQGLEEGDALKAGMGFPTGLSLNHCAAHYNPNAGNKMVLQQDDVLKVDIGVHVNGNIVDSAFTLAFNPRYDPLLEACKAATNEGLKQAGIDARLGEIGGYIQEVMESYEVELDGNTYQVKPIRNLNGHTILPYNIHGGKSVPIVKSNDQTKMEEGDVFAIETFGSTGNGYVHEEGEISHYAKRMDAPKVDLRLSSAKSLLNVINKNFGTLPFCRRYLDRLGQDKYLLGLNSLVANGVVESYPPLVDKKGSYTAQFEHTILIRPTVKEVISRGDDY.

The tract at residues methionine 1–leucine 89 is disordered. A compositionally biased stretch (basic residues) spans alanine 60–asparagine 74. Histidine 198 is a binding site for substrate. The a divalent metal cation site is built by aspartate 218, aspartate 229, and histidine 298. Histidine 306 lines the substrate pocket. 2 residues coordinate a divalent metal cation: glutamate 331 and glutamate 426.

Belongs to the peptidase M24A family. Methionine aminopeptidase eukaryotic type 2 subfamily. Co(2+) is required as a cofactor. Zn(2+) serves as cofactor. Requires Mn(2+) as cofactor. The cofactor is Fe(2+).

The protein resides in the cytoplasm. The enzyme catalyses Release of N-terminal amino acids, preferentially methionine, from peptides and arylamides.. Its function is as follows. Cotranslationally removes the N-terminal methionine from nascent proteins. The N-terminal methionine is often cleaved when the second residue in the primary sequence is small and uncharged (Met-Ala-, Cys, Gly, Pro, Ser, Thr, or Val). The protein is Methionine aminopeptidase 2 of Podospora anserina (strain S / ATCC MYA-4624 / DSM 980 / FGSC 10383) (Pleurage anserina).